The primary structure comprises 92 residues: Small ribosomal subunit protein uS19 (92 aa).

It belongs to the universal ribosomal protein uS19 family.

Functionally, protein S19 forms a complex with S13 that binds strongly to the 16S ribosomal RNA. This chain is Small ribosomal subunit protein uS19 (rpsS), found in Geobacillus stearothermophilus (Bacillus stearothermophilus).